A 652-amino-acid polypeptide reads, in one-letter code: Acetyl-coenzyme A synthetase (652 aa).

CoA is bound by residues 189–192 (RGGK) and threonine 311. Residues 387 to 389 (GEP), 411 to 416 (DTWWQT), aspartate 500, and arginine 515 contribute to the ATP site. Residue serine 523 coordinates CoA. An ATP-binding site is contributed by arginine 526. Positions 537, 539, and 542 each coordinate Mg(2+). Residue arginine 584 participates in CoA binding. Lysine 609 bears the N6-acetyllysine mark.

It belongs to the ATP-dependent AMP-binding enzyme family. Requires Mg(2+) as cofactor. In terms of processing, acetylated. Deacetylation by the SIR2-homolog deacetylase activates the enzyme.

It carries out the reaction acetate + ATP + CoA = acetyl-CoA + AMP + diphosphate. Catalyzes the conversion of acetate into acetyl-CoA (AcCoA), an essential intermediate at the junction of anabolic and catabolic pathways. AcsA undergoes a two-step reaction. In the first half reaction, AcsA combines acetate with ATP to form acetyl-adenylate (AcAMP) intermediate. In the second half reaction, it can then transfer the acetyl group from AcAMP to the sulfhydryl group of CoA, forming the product AcCoA. This is Acetyl-coenzyme A synthetase from Bartonella henselae (strain ATCC 49882 / DSM 28221 / CCUG 30454 / Houston 1) (Rochalimaea henselae).